Here is a 66-residue protein sequence, read N- to C-terminus: Conotoxin Ca5.2 (66 aa).

The signal sequence occupies residues Met1 to Ala22. The propeptide occupies Arg23–Ala48. Phe62 bears the Phenylalanine amide mark.

Belongs to the conotoxin T superfamily. Contains 2 disulfide bonds that can be either 'C1-C3, C2-C4' or 'C1-C4, C2-C3', since these disulfide connectivities have been observed for conotoxins with cysteine framework V (for examples, see AC P0DQQ7 and AC P81755). As to expression, expressed by the venom duct.

It is found in the secreted. The sequence is that of Conotoxin Ca5.2 from Conus caracteristicus (Characteristic cone).